The sequence spans 248 residues: PF03932 family protein CutC (248 aa).

The protein belongs to the CutC family. As to quaternary structure, homodimer.

Its subcellular location is the cytoplasm. This chain is PF03932 family protein CutC, found in Escherichia coli O17:K52:H18 (strain UMN026 / ExPEC).